The chain runs to 344 residues: Anthranilate phosphoribosyltransferase (344 aa).

5-phospho-alpha-D-ribose 1-diphosphate-binding positions include Gly-86, 89 to 90 (GD), Thr-94, 96 to 99 (NIST), 114 to 122 (KHGNKSASG), and Ser-126. Gly-86 contributes to the anthranilate binding site. Ser-98 contacts Mg(2+). Anthranilate is bound at residue Asn-117. Arg-172 is an anthranilate binding site. Residues Asp-231 and Glu-232 each coordinate Mg(2+).

The protein belongs to the anthranilate phosphoribosyltransferase family. Homodimer. Requires Mg(2+) as cofactor.

It carries out the reaction N-(5-phospho-beta-D-ribosyl)anthranilate + diphosphate = 5-phospho-alpha-D-ribose 1-diphosphate + anthranilate. The protein operates within amino-acid biosynthesis; L-tryptophan biosynthesis; L-tryptophan from chorismate: step 2/5. Its function is as follows. Catalyzes the transfer of the phosphoribosyl group of 5-phosphorylribose-1-pyrophosphate (PRPP) to anthranilate to yield N-(5'-phosphoribosyl)-anthranilate (PRA). The protein is Anthranilate phosphoribosyltransferase of Prochlorococcus marinus (strain AS9601).